Here is a 478-residue protein sequence, read N- to C-terminus: Isoeugenol monooxygenase (478 aa).

Fe cation is bound by residues histidine 167, histidine 218, histidine 282, and histidine 471.

It belongs to the carotenoid oxygenase family. Fe(2+) is required as a cofactor.

It catalyses the reaction (E)-isoeugenol + O2 = vanillin + acetaldehyde. Inhibited by Co(2+), Ni(2+) and Zn(2+), which may inhibit enzyme activity by replacing iron in the catalytic residues. Inhibited by incubation with high concentrations of the iron chelators 1,10-phenanthroline and Tiron. However, iron is not completely removed by the chelators, suggesting that iron is tightly bound to the enzyme. Its function is as follows. Involved in isoeugenol degradation. Catalyzes the oxidative cleavage of the side chain double-bond of isoeugenol to form vanillin and acetaldehyde. This chain is Isoeugenol monooxygenase, found in Pseudomonas nitroreducens.